Consider the following 206-residue polypeptide: MATQQPTQTDNSAQAQPPQTNPAKPTEISEPGIYVALTHDHLNYQSVIDRVRSPEAGAIVVFAGTTRNNFNSLPVQHLSYTSYAPLALRTMLTICRSILTKHGLKGIAMVHRLGVVPIGEESILIAVSSPHRQAAWRAGEEALEECKAKVEVWKREEFGGEGGGVWRANRDGAVGVKVDEPRIGKGEVDEKEDEGDSGNGGNDRKS.

Polar residues predominate over residues 1 to 23; it reads MATQQPTQTDNSAQAQPPQTNPA. The interval 1–27 is disordered; that stretch reads MATQQPTQTDNSAQAQPPQTNPAKPTE. Substrate is bound by residues 131-132, lysine 147, and 154-156; these read HR and KRE. Residues 177–188 show a composition bias toward basic and acidic residues; sequence KVDEPRIGKGEV. The disordered stretch occupies residues 177–206; that stretch reads KVDEPRIGKGEVDEKEDEGDSGNGGNDRKS. The segment covering 197 to 206 has biased composition (gly residues); it reads SGNGGNDRKS.

It belongs to the MoaE family. MOCS2B subfamily. Heterotetramer; composed of 2 small (MOCS2A) and 2 large (MOCS2B) subunits.

The protein resides in the cytoplasm. The enzyme catalyses 2 [molybdopterin-synthase sulfur-carrier protein]-C-terminal-Gly-aminoethanethioate + cyclic pyranopterin phosphate + H2O = molybdopterin + 2 [molybdopterin-synthase sulfur-carrier protein]-C-terminal Gly-Gly + 2 H(+). The protein operates within cofactor biosynthesis; molybdopterin biosynthesis. In terms of biological role, catalytic subunit of the molybdopterin synthase complex, a complex that catalyzes the conversion of precursor Z into molybdopterin. Acts by mediating the incorporation of 2 sulfur atoms from thiocarboxylated MOCS2A into precursor Z to generate a dithiolene group. This chain is Molybdopterin synthase catalytic subunit (nit-8), found in Neurospora crassa (strain ATCC 24698 / 74-OR23-1A / CBS 708.71 / DSM 1257 / FGSC 987).